The chain runs to 159 residues: uncharacterized protein (159 aa).

The disordered stretch occupies residues 9-36 (VTSGNKEKKKKRSSAGLTGHAPPAADSS).

This is an uncharacterized protein from Caenorhabditis elegans.